A 492-amino-acid chain; its full sequence is NADH-quinone oxidoreductase subunit N 2 (492 aa).

The next 14 helical transmembrane spans lie at 16–36, 44–64, 87–107, 118–138, 140–160, 175–195, 216–236, 250–270, 282–302, 309–329, 333–353, 381–401, 416–438, and 455–475; these read ILPE…DALI, PLGY…ACQA, FSLF…LVSF, GEYY…TSAT, LVLI…LAAM, FLLG…IFGA, PIIY…VAAA, PSPI…AVLL, FWIV…GALV, LLAY…AAAK, ISAA…AFAV, AAIL…GGFF, VWLT…RIIV, and PFGL…LGVL.

Belongs to the complex I subunit 2 family. As to quaternary structure, NDH-1 is composed of 14 different subunits. Subunits NuoA, H, J, K, L, M, N constitute the membrane sector of the complex.

The protein resides in the cell inner membrane. The enzyme catalyses a quinone + NADH + 5 H(+)(in) = a quinol + NAD(+) + 4 H(+)(out). NDH-1 shuttles electrons from NADH, via FMN and iron-sulfur (Fe-S) centers, to quinones in the respiratory chain. The immediate electron acceptor for the enzyme in this species is believed to be ubiquinone. Couples the redox reaction to proton translocation (for every two electrons transferred, four hydrogen ions are translocated across the cytoplasmic membrane), and thus conserves the redox energy in a proton gradient. In Koribacter versatilis (strain Ellin345), this protein is NADH-quinone oxidoreductase subunit N 2.